The primary structure comprises 491 residues: Protein SET DOMAIN GROUP 40 (491 aa).

The SET domain maps to histidine 36–glycine 278.

Belongs to the class V-like SAM-binding methyltransferase superfamily.

This chain is Protein SET DOMAIN GROUP 40 (SDG40), found in Arabidopsis thaliana (Mouse-ear cress).